The chain runs to 122 residues: NADH-quinone oxidoreductase subunit A (122 aa).

Transmembrane regions (helical) follow at residues 10–30 (MIVG…LTLG), 66–86 (IFAL…PWAV), and 91–111 (LGLF…IGLA).

This sequence belongs to the complex I subunit 3 family. NDH-1 is composed of 14 different subunits. Subunits NuoA, H, J, K, L, M, N constitute the membrane sector of the complex.

It localises to the cell membrane. The catalysed reaction is a quinone + NADH + 5 H(+)(in) = a quinol + NAD(+) + 4 H(+)(out). NDH-1 shuttles electrons from NADH, via FMN and iron-sulfur (Fe-S) centers, to quinones in the respiratory chain. The immediate electron acceptor for the enzyme in this species is believed to be a menaquinone. Couples the redox reaction to proton translocation (for every two electrons transferred, four hydrogen ions are translocated across the cytoplasmic membrane), and thus conserves the redox energy in a proton gradient. This Bacillus cytotoxicus (strain DSM 22905 / CIP 110041 / 391-98 / NVH 391-98) protein is NADH-quinone oxidoreductase subunit A.